Reading from the N-terminus, the 403-residue chain is Multifunctional CCA protein (403 aa).

ATP-binding residues include glycine 8 and arginine 11. CTP is bound by residues glycine 8 and arginine 11. Residues aspartate 21 and aspartate 23 each coordinate Mg(2+). Residues arginine 91, arginine 137, and arginine 140 each contribute to the ATP site. CTP is bound by residues arginine 91, arginine 137, and arginine 140. The region spanning threonine 228 to tryptophan 329 is the HD domain.

It belongs to the tRNA nucleotidyltransferase/poly(A) polymerase family. Bacterial CCA-adding enzyme type 1 subfamily. In terms of assembly, monomer. Can also form homodimers and oligomers. The cofactor is Mg(2+). Requires Ni(2+) as cofactor.

It catalyses the reaction a tRNA precursor + 2 CTP + ATP = a tRNA with a 3' CCA end + 3 diphosphate. The enzyme catalyses a tRNA with a 3' CCA end + 2 CTP + ATP = a tRNA with a 3' CCACCA end + 3 diphosphate. Its function is as follows. Catalyzes the addition and repair of the essential 3'-terminal CCA sequence in tRNAs without using a nucleic acid template. Adds these three nucleotides in the order of C, C, and A to the tRNA nucleotide-73, using CTP and ATP as substrates and producing inorganic pyrophosphate. tRNA 3'-terminal CCA addition is required both for tRNA processing and repair. Also involved in tRNA surveillance by mediating tandem CCA addition to generate a CCACCA at the 3' terminus of unstable tRNAs. While stable tRNAs receive only 3'-terminal CCA, unstable tRNAs are marked with CCACCA and rapidly degraded. The polypeptide is Multifunctional CCA protein (Vibrio cholerae serotype O1 (strain ATCC 39315 / El Tor Inaba N16961)).